Reading from the N-terminus, the 554-residue chain is Endochitinase (554 aa).

The N-terminal stretch at 1-19 (MRATLATLAVLALATAVQS) is a signal peptide. The GH18 domain occupies 23–398 (ARIVCYFSNW…KILHKHMSSY (376 aa)). A disulfide bond links Cys27 and Cys52. Residue 76 to 77 (LD) participates in chitin binding. The N-linked (GlcNAc...) asparagine glycan is linked to Asn85. A chitin-binding site is contributed by 103–106 (GGWA). Glu146 acts as the Proton donor in catalysis. Chitin contacts are provided by residues Tyr147 and 213–216 (MSYD). N-linked (GlcNAc...) asparagine glycosylation is present at Asn303. Position 370 (Trp370) interacts with chitin. A disordered region spans residues 398–494 (YTVPPPHTEN…VPPTENEVDG (97 aa)). A compositionally biased stretch (low complexity) spans 431–457 (PTTTTAKPASTTKTTVKTTTTTTAKPP). A compositionally biased stretch (basic and acidic residues) spans 467–477 (INVRPEPKPEP). In terms of domain architecture, Chitin-binding type-2 spans 495 to 553 (SEICNSDQDYIPDKKHCDKYWRCVNGEAMQFSCQHGTVFNVELNVCDWPSNATRRECQQ). A disulfide bond links Cys527 and Cys540. Residue Asn545 is glycosylated (N-linked (GlcNAc...) asparagine).

Belongs to the glycosyl hydrolase 18 family. Chitinase class II subfamily. In terms of tissue distribution, epidermis and gut.

The protein localises to the secreted. It carries out the reaction Random endo-hydrolysis of N-acetyl-beta-D-glucosaminide (1-&gt;4)-beta-linkages in chitin and chitodextrins.. Its function is as follows. Digests chitin in the exoskeleton during the molting process. In Manduca sexta (Tobacco hawkmoth), this protein is Endochitinase.